A 354-amino-acid chain; its full sequence is Uroporphyrinogen decarboxylase (354 aa).

Residues 25-29 (RQAGR), Asp75, Tyr152, Thr207, and His330 each bind substrate.

This sequence belongs to the uroporphyrinogen decarboxylase family. Homodimer.

The protein resides in the cytoplasm. It catalyses the reaction uroporphyrinogen III + 4 H(+) = coproporphyrinogen III + 4 CO2. It participates in porphyrin-containing compound metabolism; protoporphyrin-IX biosynthesis; coproporphyrinogen-III from 5-aminolevulinate: step 4/4. Catalyzes the decarboxylation of four acetate groups of uroporphyrinogen-III to yield coproporphyrinogen-III. The polypeptide is Uroporphyrinogen decarboxylase (Xanthomonas euvesicatoria pv. vesicatoria (strain 85-10) (Xanthomonas campestris pv. vesicatoria)).